We begin with the raw amino-acid sequence, 412 residues long: Putative competence-damage inducible protein (412 aa).

Belongs to the CinA family.

The polypeptide is Putative competence-damage inducible protein (Bacillus cereus (strain AH820)).